The chain runs to 279 residues: Movement protein (279 aa).

The protein belongs to the cucumovirus movement protein family.

The protein localises to the host cell junction. Its subcellular location is the host plasmodesma. Transports viral genome to neighboring plant cells directly through plasmosdesmata, without any budding. The movement protein allows efficient cell to cell propagation, by bypassing the host cell wall barrier. Acts by forming a tubular structure at the host plasmodesmata, enlarging it enough to allow free passage of virion capsids. In Cucumber mosaic virus (strain Kin) (CMV), this protein is Movement protein.